The primary structure comprises 272 residues: Phosphatidylglycerol--prolipoprotein diacylglyceryl transferase (272 aa).

4 helical membrane passes run 16-36, 62-82, 97-117, and 129-149; these read VGLHLSWYGILFSLGIFLSSF, FALGALLAIIIGARLAYVLFY, IWKGGLSSHGAVISVVIWAAV, and LSVTYICDLCGAVFGCAALLI. Arg150 contacts a 1,2-diacyl-sn-glycero-3-phospho-(1'-sn-glycerol). 2 consecutive transmembrane segments (helical) span residues 206-226 and 246-266; these read GVIRLGSGYSAAGALIGVAVI and ILTIGQWLSIPMIFLGVGIIW.

It belongs to the Lgt family.

It localises to the cell inner membrane. The catalysed reaction is L-cysteinyl-[prolipoprotein] + a 1,2-diacyl-sn-glycero-3-phospho-(1'-sn-glycerol) = an S-1,2-diacyl-sn-glyceryl-L-cysteinyl-[prolipoprotein] + sn-glycerol 1-phosphate + H(+). It functions in the pathway protein modification; lipoprotein biosynthesis (diacylglyceryl transfer). Catalyzes the transfer of the diacylglyceryl group from phosphatidylglycerol to the sulfhydryl group of the N-terminal cysteine of a prolipoprotein, the first step in the formation of mature lipoproteins. The protein is Phosphatidylglycerol--prolipoprotein diacylglyceryl transferase of Chlamydia trachomatis serovar D (strain ATCC VR-885 / DSM 19411 / UW-3/Cx).